The following is a 431-amino-acid chain: Trigger factor (431 aa).

Positions 158–243 (GDLVAVETWS…VAEVSEPVVP (86 aa)) constitute a PPIase FKBP-type domain.

This sequence belongs to the FKBP-type PPIase family. Tig subfamily.

The protein localises to the cytoplasm. It carries out the reaction [protein]-peptidylproline (omega=180) = [protein]-peptidylproline (omega=0). In terms of biological role, involved in protein export. Acts as a chaperone by maintaining the newly synthesized protein in an open conformation. Functions as a peptidyl-prolyl cis-trans isomerase. This chain is Trigger factor, found in Stenotrophomonas maltophilia (strain K279a).